We begin with the raw amino-acid sequence, 461 residues long: Kremen protein 2 (461 aa).

The signal sequence occupies residues 1–24 (MGTPHLQGFLLLFPLLLRLHGASA). Residues 25-363 (GSLHSPGLSE…SPKPGAAQAS (339 aa)) lie on the Extracellular side of the membrane. The 85-residue stretch at 34 to 118 (ECFQVNGADY…YWRYCDIPTC (85 aa)) folds into the Kringle domain. Intrachain disulfides connect Cys35–Cys118, Cys59–Cys99, and Cys88–Cys113. Asn48 carries N-linked (GlcNAc...) asparagine glycosylation. The WSC domain occupies 120–214 (MPGYLGCFVD…DGRLGIYEVS (95 aa)). Cys218 and Cys244 form a disulfide bridge. The region spanning 218–325 (CQGNWSAPQG…QGFALTYRGL (108 aa)) is the CUB domain. N-linked (GlcNAc...) asparagine glycosylation is found at Asn221, Asn243, and Asn350. Positions 329-357 (VEGRASPEDSTESLAGDPDGANASCSPKP) are disordered. The chain crosses the membrane as a helical span at residues 364 to 386 (IGARVFSTVTAFSVLLLLLLSLL). Residues 387 to 461 (RLLRRRSCLL…SSLRSLVSAL (75 aa)) lie on the Cytoplasmic side of the membrane. Positions 429-452 (CPPGDSQAEGPAAGYRPLSASSQS) are disordered.

In terms of assembly, interacts with ERLEC1. Forms a ternary complex with DKK1 and LRP6.

Its subcellular location is the membrane. Receptor for Dickkopf proteins. Cooperates with DKK1/2 to inhibit Wnt/beta-catenin signaling by promoting the endocytosis of Wnt receptors LRP5 and LRP6. Plays a role in limb development; attenuates Wnt signaling in the developing limb to allow normal limb patterning and can also negatively regulate bone formation. This is Kremen protein 2 (Kremen2) from Mus musculus (Mouse).